The sequence spans 412 residues: Na(+)/H(+) antiporter NhaA 1 (412 aa).

10 consecutive transmembrane segments (helical) span residues 34–54 (VGGMVLLAAAALALVLANSPA), 75–95 (LTIGEWAKDGLLAIFFFVAGL), 114–134 (LPVVAALGGMVVPAVLAFAIG), 142–162 (AAWAIPVATDIAFALGVLSLT), 183–203 (LGAIVVIAVLFTSGLSVLALL), 234–254 (WIAVHSSGIHATIAGVALGLL), 282–302 (LIVPVFALFAAGVPVDGEALV), 309–329 (VAIAVVVGLVVGKLVGIFGSS), 349–369 (LSALAMLGGVGFTVSLLIAEL), and 379–399 (AKAAVLIASALASLLAAVMLL).

Belongs to the NhaA Na(+)/H(+) (TC 2.A.33) antiporter family.

It is found in the cell membrane. The enzyme catalyses Na(+)(in) + 2 H(+)(out) = Na(+)(out) + 2 H(+)(in). Functionally, na(+)/H(+) antiporter that extrudes sodium in exchange for external protons. This Saccharopolyspora erythraea (strain ATCC 11635 / DSM 40517 / JCM 4748 / NBRC 13426 / NCIMB 8594 / NRRL 2338) protein is Na(+)/H(+) antiporter NhaA 1.